A 215-amino-acid chain; its full sequence is Probable transaldolase (215 aa).

Lys-83 serves as the catalytic Schiff-base intermediate with substrate.

It belongs to the transaldolase family. Type 3B subfamily.

Its subcellular location is the cytoplasm. The catalysed reaction is D-sedoheptulose 7-phosphate + D-glyceraldehyde 3-phosphate = D-erythrose 4-phosphate + beta-D-fructose 6-phosphate. It participates in carbohydrate degradation; pentose phosphate pathway; D-glyceraldehyde 3-phosphate and beta-D-fructose 6-phosphate from D-ribose 5-phosphate and D-xylulose 5-phosphate (non-oxidative stage): step 2/3. In terms of biological role, transaldolase is important for the balance of metabolites in the pentose-phosphate pathway. This chain is Probable transaldolase, found in Heliobacterium modesticaldum (strain ATCC 51547 / Ice1).